A 207-amino-acid chain; its full sequence is Adenylyl-sulfate kinase (207 aa).

39–46 (GLSGAGKS) serves as a coordination point for ATP. S113 serves as the catalytic Phosphoserine intermediate.

It belongs to the APS kinase family.

It carries out the reaction adenosine 5'-phosphosulfate + ATP = 3'-phosphoadenylyl sulfate + ADP + H(+). Its pathway is sulfur metabolism; hydrogen sulfide biosynthesis; sulfite from sulfate: step 2/3. Catalyzes the synthesis of activated sulfate. This chain is Adenylyl-sulfate kinase, found in Vibrio vulnificus (strain CMCP6).